Consider the following 406-residue polypeptide: Imidazolonepropionase (406 aa).

Fe(3+) contacts are provided by H72 and H74. H72 and H74 together coordinate Zn(2+). Positions 81, 144, and 177 each coordinate 4-imidazolone-5-propanoate. Y144 is a binding site for N-formimidoyl-L-glutamate. H242 provides a ligand contact to Fe(3+). H242 provides a ligand contact to Zn(2+). Q245 lines the 4-imidazolone-5-propanoate pocket. D317 provides a ligand contact to Fe(3+). D317 is a binding site for Zn(2+). N319 and G321 together coordinate N-formimidoyl-L-glutamate. T322 contributes to the 4-imidazolone-5-propanoate binding site.

It belongs to the metallo-dependent hydrolases superfamily. HutI family. Requires Zn(2+) as cofactor. The cofactor is Fe(3+).

The protein localises to the cytoplasm. The enzyme catalyses 4-imidazolone-5-propanoate + H2O = N-formimidoyl-L-glutamate. The protein operates within amino-acid degradation; L-histidine degradation into L-glutamate; N-formimidoyl-L-glutamate from L-histidine: step 3/3. Its function is as follows. Catalyzes the hydrolytic cleavage of the carbon-nitrogen bond in imidazolone-5-propanoate to yield N-formimidoyl-L-glutamate. It is the third step in the universal histidine degradation pathway. In Yersinia pseudotuberculosis serotype O:3 (strain YPIII), this protein is Imidazolonepropionase.